A 416-amino-acid chain; its full sequence is E3 ubiquitin-protein ligase RNFT1 (416 aa).

Disordered stretches follow at residues 1 to 50 (MKHR…MSLP) and 68 to 117 (DLSS…DSRE). The segment covering 7–19 (HERQSSTESKNLK) has biased composition (basic and acidic residues). Composition is skewed to polar residues over residues 20–45 (ETTQLIMQSSSDHTHHQLGSNDSPSA) and 68–80 (DLSSQDSQHVARS). Residues 81–100 (NSRRVRPSTHGRSPSRHGHT) show a composition bias toward basic residues. The next 6 helical transmembrane spans lie at 146 to 166 (LVVQHITGISVGIGLLTTFLY), 184 to 204 (LQCLWVLVFLLFSSFLLYYTF), 214 to 234 (VFMNPSLGPLHFFDALWVVGI), 237 to 257 (FIGKFFFMGLKCIILLVPSFV), 265 to 287 (YWYMALEELAQCYCTLVSTPVWF), and 302 to 322 (WHFGILLALLYLILKILIIFG). A required for ubiquitin ligase activity and for protection against ER stress-induced cell death region spans residues 349–400 (CSEADGMCAICQAEFTKPIALICQHVFCEECISSWFNKEKTCPLCRTLISNH). The RING-type zinc-finger motif lies at 356 to 394 (CAICQAEFTKPIALICQHVFCEECISSWFNKEKTCPLCR).

It is found in the endoplasmic reticulum membrane. It carries out the reaction S-ubiquitinyl-[E2 ubiquitin-conjugating enzyme]-L-cysteine + [acceptor protein]-L-lysine = [E2 ubiquitin-conjugating enzyme]-L-cysteine + N(6)-ubiquitinyl-[acceptor protein]-L-lysine.. It participates in protein modification; protein ubiquitination. Its function is as follows. E3 ubiquitin-protein ligase that acts in the endoplasmic reticulum (ER)-associated degradation (ERAD) pathway, which targets misfolded proteins that accumulate in the endoplasmic reticulum (ER) for ubiquitination and subsequent proteasome-mediated degradation. Protects cells from ER stress-induced apoptosis. This Xenopus laevis (African clawed frog) protein is E3 ubiquitin-protein ligase RNFT1 (rnft1).